The following is a 96-amino-acid chain: Protein Vpr (96 aa).

Residues Met1–Leu42 form a homooligomerization region. 3 positions are modified to phosphoserine; by host: Ser79, Ser94, and Ser96.

Belongs to the HIV-1 VPR protein family. As to quaternary structure, homooligomer, may form homodimer. Interacts with p6-gag region of the Pr55 Gag precursor protein through a (Leu-X-X)4 motif near the C-terminus of the P6gag protein. Interacts with host UNG. May interact with host RAD23A/HHR23A. Interacts with host VPRBP/DCAF1, leading to hijack the CUL4A-RBX1-DDB1-DCAF1/VPRBP complex, mediating ubiquitination of host proteins such as TERT and ZGPAT and arrest of the cell cycle in G2 phase. Post-translationally, phosphorylated on several residues by host. These phosphorylations regulate VPR activity for the nuclear import of the HIV-1 pre-integration complex.

It is found in the virion. The protein resides in the host nucleus. The protein localises to the host extracellular space. Functionally, during virus replication, may deplete host UNG protein, and incude G2-M cell cycle arrest. Acts by targeting specific host proteins for degradation by the 26S proteasome, through association with the cellular CUL4A-DDB1 E3 ligase complex by direct interaction with host VPRPB/DCAF-1. Cell cycle arrest reportedly occurs within hours of infection and is not blocked by antiviral agents, suggesting that it is initiated by the VPR carried into the virion. Additionally, VPR induces apoptosis in a cell cycle dependent manner suggesting that these two effects are mechanistically linked. Detected in the serum and cerebrospinal fluid of AIDS patient, VPR may also induce cell death to bystander cells. During virus entry, plays a role in the transport of the viral pre-integration (PIC) complex to the host nucleus. This function is crucial for viral infection of non-dividing macrophages. May act directly at the nuclear pore complex, by binding nucleoporins phenylalanine-glycine (FG)-repeat regions. This chain is Protein Vpr, found in Homo sapiens (Human).